Reading from the N-terminus, the 818-residue chain is Response regulator SSK1 (818 aa).

The region spanning asparagine 611–glycine 769 is the Response regulatory domain. Position 660 is a 4-aspartylphosphate (aspartate 660).

It belongs to the SSK1 family.

Its subcellular location is the cytoplasm. Two-domain response regulator protein in the two-component signal transduction system of the HOG1 pathway. Modulates stress response, melanin biosynthesis and virulence via its regulation of the phosphorylation of HOG1. The protein is Response regulator SSK1 of Verticillium dahliae (strain VdLs.17 / ATCC MYA-4575 / FGSC 10137) (Verticillium wilt).